A 225-amino-acid polypeptide reads, in one-letter code: UPF0758 protein NMC1174 (225 aa).

The region spanning 102–224 (VLSDPDTVAD…VRSFRQLGLM (123 aa)) is the MPN domain. Zn(2+) is bound by residues H173, H175, and D186. A JAMM motif motif is present at residues 173–186 (HNHPGGSPEPSQED).

Belongs to the UPF0758 family.

The sequence is that of UPF0758 protein NMC1174 from Neisseria meningitidis serogroup C / serotype 2a (strain ATCC 700532 / DSM 15464 / FAM18).